An 81-amino-acid polypeptide reads, in one-letter code: Sulfur carrier protein TusA (81 aa).

The Cysteine persulfide intermediate role is filled by Cys19.

This sequence belongs to the sulfur carrier protein TusA family. Interacts with IscS.

It localises to the cytoplasm. It functions in the pathway tRNA modification. Functionally, sulfur carrier protein involved in sulfur trafficking in the cell. Part of a sulfur-relay system required for 2-thiolation during synthesis of 2-thiouridine of the modified wobble base 5-methylaminomethyl-2-thiouridine (mnm(5)s(2)U) in tRNA. Interacts with IscS and stimulates its cysteine desulfurase activity. Accepts an activated sulfur from IscS, which is then transferred to TusD, and thus determines the direction of sulfur flow from IscS to 2-thiouridine formation. Also appears to be involved in sulfur transfer for the biosynthesis of molybdopterin. The polypeptide is Sulfur carrier protein TusA (Cronobacter sakazakii (strain ATCC BAA-894) (Enterobacter sakazakii)).